The chain runs to 539 residues: CTP synthase (539 aa).

The amidoligase domain stretch occupies residues 1–267 (MTKYIFVTGG…DQKVCDFLHI (267 aa)). Ser-13 is a binding site for CTP. Ser-13 is a UTP binding site. 14–19 (SLGKGI) contributes to the ATP binding site. An L-glutamine-binding site is contributed by Tyr-54. Residue Asp-71 coordinates ATP. 2 residues coordinate Mg(2+): Asp-71 and Glu-141. CTP is bound by residues 148–150 (DME), 188–193 (KTKPTQ), and Lys-224. Residues 188–193 (KTKPTQ) and Lys-224 each bind UTP. One can recognise a Glutamine amidotransferase type-1 domain in the interval 294 to 537 (KITLVGKYVE…IGAASGLPEQ (244 aa)). Residue Gly-356 participates in L-glutamine binding. Cys-383 acts as the Nucleophile; for glutamine hydrolysis in catalysis. L-glutamine-binding positions include 384–387 (LGMQ), Glu-407, and Arg-465. Catalysis depends on residues His-510 and Glu-512.

It belongs to the CTP synthase family. In terms of assembly, homotetramer.

It catalyses the reaction UTP + L-glutamine + ATP + H2O = CTP + L-glutamate + ADP + phosphate + 2 H(+). The enzyme catalyses L-glutamine + H2O = L-glutamate + NH4(+). It carries out the reaction UTP + NH4(+) + ATP = CTP + ADP + phosphate + 2 H(+). It functions in the pathway pyrimidine metabolism; CTP biosynthesis via de novo pathway; CTP from UDP: step 2/2. With respect to regulation, allosterically activated by GTP, when glutamine is the substrate; GTP has no effect on the reaction when ammonia is the substrate. The allosteric effector GTP functions by stabilizing the protein conformation that binds the tetrahedral intermediate(s) formed during glutamine hydrolysis. Inhibited by the product CTP, via allosteric rather than competitive inhibition. Catalyzes the ATP-dependent amination of UTP to CTP with either L-glutamine or ammonia as the source of nitrogen. Regulates intracellular CTP levels through interactions with the four ribonucleotide triphosphates. The polypeptide is CTP synthase (Lactobacillus helveticus (strain DPC 4571)).